The chain runs to 435 residues: Glutamyl-tRNA reductase (435 aa).

Substrate-binding positions include 49–52, Ser109, 114–116, and Gln120; these read TCNR and ETQ. Cys50 serves as the catalytic Nucleophile. 189–194 lines the NADP(+) pocket; sequence GAGEMS.

The protein belongs to the glutamyl-tRNA reductase family. Homodimer.

The catalysed reaction is (S)-4-amino-5-oxopentanoate + tRNA(Glu) + NADP(+) = L-glutamyl-tRNA(Glu) + NADPH + H(+). It participates in porphyrin-containing compound metabolism; protoporphyrin-IX biosynthesis; 5-aminolevulinate from L-glutamyl-tRNA(Glu): step 1/2. Functionally, catalyzes the NADPH-dependent reduction of glutamyl-tRNA(Glu) to glutamate 1-semialdehyde (GSA). The chain is Glutamyl-tRNA reductase from Listeria monocytogenes serotype 4a (strain HCC23).